Here is a 605-residue protein sequence, read N- to C-terminus: Glutamine--fructose-6-phosphate aminotransferase [isomerizing] (605 aa).

The active-site Nucleophile; for GATase activity is the Cys2. The Glutamine amidotransferase type-2 domain maps to Cys2–Thr216. SIS domains follow at residues Asp280–Thr420 and Leu454–Pro595. The active-site For Fru-6P isomerization activity is Lys600.

Its subcellular location is the cytoplasm. It catalyses the reaction D-fructose 6-phosphate + L-glutamine = D-glucosamine 6-phosphate + L-glutamate. In terms of biological role, involved in the production of the root hair deformation (HAD) factor specifically on medicago. The protein is Glutamine--fructose-6-phosphate aminotransferase [isomerizing] (nodM) of Rhizobium meliloti (Ensifer meliloti).